The following is a 60-amino-acid chain: Large ribosomal subunit protein uL30 (60 aa).

The protein belongs to the universal ribosomal protein uL30 family. As to quaternary structure, part of the 50S ribosomal subunit.

The polypeptide is Large ribosomal subunit protein uL30 (Bacillus anthracis (strain A0248)).